Consider the following 999-residue polypeptide: Probable basic-leucine zipper transcription factor N (999 aa).

Low complexity-rich tracts occupy residues 1 to 79 (MYQS…YQQQ) and 88 to 126 (NNVN…INNN). The segment at 1–126 (MYQSIPQQGN…NNNNGNINNN (126 aa)) is disordered. 2 coiled-coil regions span residues 148–198 (QQQQ…MVLM) and 232–282 (GIQQ…QQIS). The span at 286-302 (ESASPYYSTPIQSNTML) shows a compositional bias: polar residues. Disordered stretches follow at residues 286–406 (ESAS…SQDQ), 450–533 (QQLH…PTIN), and 601–620 (EKQK…NYRQ). Over residues 303 to 347 (SIPSSPGIPSSIPQLNNSNNINNNSNNNNNNNNNNNNNNINYNSN) the composition is skewed to low complexity. Over residues 348 to 406 (MASNFISQHSNNGSNTSSPVPQTTYLQNSGGNFNAYNGSNTNSPITPSSYLQPTTSQDQ) the composition is skewed to polar residues. Residues 423-451 (IQQQQKILQQQQQQQLLLQQQIQQQQQQQ) adopt a coiled-coil conformation. Positions 450 to 517 (QQLHQPQSPQ…IIQPTTIQPQ (68 aa)) are enriched in low complexity. A bZIP domain is found at 601-664 (EKQKTRRRAS…KKLLHENNIL (64 aa)). The tract at residues 602–632 (KQKTRRRASQNLASRNYRQRKKQYVNEVEDR) is basic motif. A leucine-zipper region spans residues 636–643 (IVQENERL). Disordered regions lie at residues 665-711 (KSGG…VVET), 779-807 (QSCP…SPYE), and 870-899 (VNNG…TTTT). Positions 682–692 (SEDEDEDDFDQ) are enriched in acidic residues. A coiled-coil region spans residues 921–950 (HLVQLSGLLDKLKENIDHENETLIQTYEKL).

The protein belongs to the bZIP family.

The protein resides in the nucleus. Probable transcriptional regulator. The chain is Probable basic-leucine zipper transcription factor N (bzpN) from Dictyostelium discoideum (Social amoeba).